The chain runs to 276 residues: Large ribosomal subunit protein uL2 (276 aa).

Disordered regions lie at residues 30–57 (EKSL…QGGG) and 219–276 (TVRG…RSKK).

This sequence belongs to the universal ribosomal protein uL2 family. As to quaternary structure, part of the 50S ribosomal subunit. Forms a bridge to the 30S subunit in the 70S ribosome.

Its function is as follows. One of the primary rRNA binding proteins. Required for association of the 30S and 50S subunits to form the 70S ribosome, for tRNA binding and peptide bond formation. It has been suggested to have peptidyltransferase activity; this is somewhat controversial. Makes several contacts with the 16S rRNA in the 70S ribosome. The chain is Large ribosomal subunit protein uL2 from Exiguobacterium sibiricum (strain DSM 17290 / CCUG 55495 / CIP 109462 / JCM 13490 / 255-15).